The primary structure comprises 102 residues: MYAIIKTGGKQLKVEEGQSVFVEKLNVAEGEKVTFDQVLFVGGESTKVGSPVVEGASVAGTVEKQGKQKKITTFKYKAKKNQHTKTGHRQPYTKVMIDSINA.

It belongs to the bacterial ribosomal protein bL21 family. As to quaternary structure, part of the 50S ribosomal subunit. Contacts protein L20.

In terms of biological role, this protein binds to 23S rRNA in the presence of protein L20. This is Large ribosomal subunit protein bL21 from Pediococcus pentosaceus (strain ATCC 25745 / CCUG 21536 / LMG 10740 / 183-1w).